A 334-amino-acid chain; its full sequence is UstYa family oxidase aprY (334 aa).

The chain crosses the membrane as a helical span at residues 55-75 (IWILLTITNLIILGITVSMIV). An N-linked (GlcNAc...) asparagine glycan is attached at Asn112. The HXXHC 1 signature appears at 185–189 (HQIHC). Asn214 is a glycosylation site (N-linked (GlcNAc...) asparagine). Positions 223–227 (HLGHC) match the HXXHC 2 motif. Residues 306 to 318 (SELGEKLGKHQKQ) show a composition bias toward basic and acidic residues. The tract at residues 306–334 (SELGEKLGKHQKQEGVLGQAGHQHTKRHE) is disordered.

Belongs to the ustYa family.

It is found in the membrane. Its pathway is secondary metabolite biosynthesis. Functionally, ustYa family oxidase; part of the gene cluster that mediates the biosynthesis of the asperipin-2a, a bicyclic peptide that possesses two macrocyclic ether rings consisting of 14- and 17-membered paracyclophans. Within the pathway, aprY is responsible for the synthesis of the bicyclic structure of asperipin-2a. The pathway starts with the processing of the precursor aprA by kexin proteases to produce 11 identical copies of the hexapeptide Phe-Tyr-Tyr-Thr-Gly-Tyr. Macrocyclization of asperipin-2a may accompany an alpha-hydroxylation-dehydration sequence to give an imine, which is readily hydrolyzed to yield putative ketone intermediate. The reductase aprR may be required for the final reduction to yield asperipin-2a. In Aspergillus flavus (strain ATCC 200026 / FGSC A1120 / IAM 13836 / NRRL 3357 / JCM 12722 / SRRC 167), this protein is UstYa family oxidase aprY.